The following is a 215-amino-acid chain: 3-isopropylmalate dehydratase small subunit (215 aa).

The protein belongs to the LeuD family. LeuD type 1 subfamily. In terms of assembly, heterodimer of LeuC and LeuD.

It carries out the reaction (2R,3S)-3-isopropylmalate = (2S)-2-isopropylmalate. It participates in amino-acid biosynthesis; L-leucine biosynthesis; L-leucine from 3-methyl-2-oxobutanoate: step 2/4. Functionally, catalyzes the isomerization between 2-isopropylmalate and 3-isopropylmalate, via the formation of 2-isopropylmaleate. The protein is 3-isopropylmalate dehydratase small subunit of Hahella chejuensis (strain KCTC 2396).